The primary structure comprises 332 residues: RNA polymerase II holoenzyme cyclin-like subunit (332 aa).

Positions 74–175 (RIYCYFLIMK…LIEELQSYMI (102 aa)) constitute a Cyclin N-terminal domain.

Belongs to the cyclin family. Cyclin C subfamily. Component of the SRB8-11 complex, a regulatory module of the Mediator complex.

The protein resides in the nucleus. Component of the SRB8-11 complex. The SRB8-11 complex is a regulatory module of the Mediator complex which is itself involved in regulation of basal and activated RNA polymerase II-dependent transcription. The SRB8-11 complex may be involved in the transcriptional repression of a subset of genes regulated by Mediator. It may inhibit the association of the Mediator complex with RNA polymerase II to form the holoenzyme complex. The SRB8-11 complex phosphorylates the C-terminal domain (CTD) of the largest subunit of RNA polymerase II. This is RNA polymerase II holoenzyme cyclin-like subunit (SSN8) from Eremothecium gossypii (strain ATCC 10895 / CBS 109.51 / FGSC 9923 / NRRL Y-1056) (Yeast).